The primary structure comprises 416 residues: Isocitrate dehydrogenase [NADP] (416 aa).

NADP(+) is bound by residues 77–79 and arginine 84; that span reads TIT. Threonine 79 lines the substrate pocket. Substrate is bound by residues 96 to 102, arginine 111, and arginine 134; that span reads SPNGTIR. Aspartate 254 lines the Mn(2+) pocket. Residue lysine 262 participates in NADP(+) binding. Aspartate 277 is a binding site for Mn(2+). NADP(+) is bound by residues 312-317 and asparagine 330; that span reads GTVTRH.

It belongs to the isocitrate and isopropylmalate dehydrogenases family. As to quaternary structure, heterodimer. Mg(2+) serves as cofactor. Mn(2+) is required as a cofactor.

The protein localises to the cytoplasm. The catalysed reaction is D-threo-isocitrate + NADP(+) = 2-oxoglutarate + CO2 + NADPH. May supply 2-oxoglutarate for amino acid biosynthesis and ammonia assimilation via the glutamine synthetase/glutamate synthase (GS/GOGAT) pathway. This Solanum tuberosum (Potato) protein is Isocitrate dehydrogenase [NADP] (ICDH-1).